The sequence spans 842 residues: ATP-binding cassette sub-family B member 6 (842 aa).

Topologically, residues 1-26 (MVTVGNYCEAEGPLGPAWAQNGLSPC) are lumenal. The required for the lysosomal targeting stretch occupies residues 1 to 205 (MVTVGNYCEA…SGGLFILGLW (205 aa)). The tract at residues 1-236 (MVTVGNYCEA…RNQAQSTDRT (236 aa)) is required for ATPase activity. Residues cysteine 8 and cysteine 26 are joined by a disulfide bond. The chain crosses the membrane as a helical span at residues 27–47 (FFFTLVPSTLMALGALALVLV). The Cytoplasmic portion of the chain corresponds to 48 to 72 (LPCRRRDVPSGTEELFWAADSRVAP). A helical transmembrane segment spans residues 73 to 93 (YALQLFLATLQVALPLAGLAG). Residues 94–106 (RVGTARGVRLPGY) lie on the Lumenal side of the membrane. Residues 107–127 (LLLASMLGSLASACGLWLLVA) form a helical membrane-spanning segment. Over 128–147 (ERRQARQSLAMGVWMKFRHS) the chain is Cytoplasmic. Residues 148–168 (SGLLLLWTVAFAAENLALVSW) traverse the membrane as a helical segment. Topologically, residues 169–185 (NSPQWWWARADLGQQVQ) are lumenal. The chain crosses the membrane as a helical span at residues 186 to 206 (FGLWVLRYVISGGLFILGLWA). Over 207 to 263 (PGLRPQSYTLRVHEADQDVERNQAQSTDRTSTWRDLGRKLRLLSSYLWPRGSPALQF) the chain is Cytoplasmic. Residues 264–284 (IVLICLGLMGLDRALNVLVPI) traverse the membrane as a helical segment. In terms of domain architecture, ABC transmembrane type-1 spans 265 to 556 (VLICLGLMGL…FGTYYRMIQT (292 aa)). At 285–305 (FYRDIVNLLTSKAPWSSLAWT) the chain is on the lumenal side. Residues 306–326 (VTTYVFLKFLQGGGTGSTGFV) traverse the membrane as a helical segment. Residues 327–375 (SNLRTFLWIRVQQFTSRGVELRLFSHLHELSLRWHLGRRTGEVLRVVDR) lie on the Cytoplasmic side of the membrane. Residues 376-396 (GTSSVTGLLSYLVFNIIPTLA) traverse the membrane as a helical segment. Position 397 (aspartate 397) is a topological domain, lumenal. Residues 398 to 418 (IIIGIIYFSMFFNAWFGLIVF) traverse the membrane as a helical segment. Residues 419-499 (LCMSLYLFLT…SSASLVVLNQ (81 aa)) lie on the Cytoplasmic side of the membrane. The helical transmembrane segment at 500 to 520 (TQNLVIGLGLLAGSLLCAYFV) threads the bilayer. Topologically, residues 521 to 529 (SEQKLQVGD) are lumenal. The helical transmembrane segment at 530-550 (FVLFGTYITQLYMPLNWFGTY) threads the bilayer. Residues 551-842 (YRMIQTNFID…SEDSKPQDIA (292 aa)) are Cytoplasmic-facing. Residues 590-824 (IEFENVHFSY…GGVYAEMWQL (235 aa)) form the ABC transporter domain. Position 623–630 (623–630 (GPSGAGKS)) interacts with ATP.

It belongs to the ABC transporter superfamily. ABCB family. Heavy Metal importer (TC 3.A.1.210) subfamily. As to quaternary structure, homodimer. Post-translationally, N-glycosylated. Highly expressed in the liver, adrenal glands, and testis.

The protein resides in the cell membrane. It is found in the mitochondrion outer membrane. It localises to the endoplasmic reticulum membrane. Its subcellular location is the golgi apparatus membrane. The protein localises to the endosome membrane. The protein resides in the lysosome membrane. It is found in the late endosome membrane. It localises to the early endosome membrane. Its subcellular location is the secreted. The protein localises to the extracellular exosome. The protein resides in the mitochondrion. It is found in the endosome. It localises to the multivesicular body membrane. Its subcellular location is the melanosome membrane. It catalyses the reaction heme b(in) + ATP + H2O = heme b(out) + ADP + phosphate + H(+). It carries out the reaction coproporphyrin III(in) + ATP + H2O = coproporphyrin III(out) + ADP + phosphate + H(+). The catalysed reaction is pheophorbide a(in) + ATP + H2O = pheophorbide a(out) + ADP + phosphate + H(+). The enzyme catalyses coproporphyrinogen III(in) + ATP + H2O = coproporphyrinogen III(out) + ADP + phosphate + H(+). It catalyses the reaction protoporphyrin IX(in) + ATP + H2O = protoporphyrin IX(out) + ADP + phosphate + H(+). It carries out the reaction coproporphyrin I(in) + ATP + H2O = coproporphyrin I(out) + ADP + phosphate + H(+). The catalysed reaction is uroporphyrin I(in) + ATP + H2O = uroporphyrin I(out) + ADP + phosphate + H(+). The enzyme catalyses uroporphyrin III(in) + ATP + H2O = uroporphyrin III(out) + ADP + phosphate + H(+). Its function is as follows. ATP-dependent transporter that catalyzes the transport of a broad-spectrum of porphyrins from the cytoplasm to the extracellular space through the plasma membrane or into the vesicle lumen. May also function as an ATP-dependent importer of porphyrins from the cytoplasm into the mitochondria, in turn may participate in the de novo heme biosynthesis regulation and in the coordination of heme and iron homeostasis during phenylhydrazine stress. May also play a key role in the early steps of melanogenesis producing PMEL amyloid fibrils. In vitro, it confers to cells a resistance to toxic metal such as arsenic and cadmium and against chemotherapeutics agent such as 5-fluorouracil, SN-38 and vincristin. In addition may play a role in the transition metal homeostasis. This Mesocricetus auratus (Golden hamster) protein is ATP-binding cassette sub-family B member 6.